Reading from the N-terminus, the 219-residue chain is Probable GTP-binding protein EngB (219 aa).

Positions 31–205 (VGVEIAFAGR…LSILNEWCHP (175 aa)) constitute an EngB-type G domain. GTP is bound by residues 39–46 (GRSNAGKS), 66–70 (GRTQL), 84–87 (DLPG), 151–154 (TKSD), and 184–186 (FSA). Positions 46 and 68 each coordinate Mg(2+).

Belongs to the TRAFAC class TrmE-Era-EngA-EngB-Septin-like GTPase superfamily. EngB GTPase family. Mg(2+) is required as a cofactor.

Its function is as follows. Necessary for normal cell division and for the maintenance of normal septation. The sequence is that of Probable GTP-binding protein EngB from Shewanella sp. (strain W3-18-1).